A 496-amino-acid polypeptide reads, in one-letter code: Cytochrome P450 71D180 (496 aa).

Residues methionine 1–methionine 21 form a helical; Signal-anchor for type II membrane protein membrane-spanning segment. Heme is bound at residue cysteine 435. The disordered stretch occupies residues methionine 471–serine 496.

The protein belongs to the cytochrome P450 family. Heme serves as cofactor.

The protein localises to the membrane. The catalysed reaction is gamma-terpinene + 2 reduced [NADPH--hemoprotein reductase] + 2 O2 = carvacrol + 2 oxidized [NADPH--hemoprotein reductase] + 3 H2O + 2 H(+). The enzyme catalyses (4S)-limonene + reduced [NADPH--hemoprotein reductase] + O2 = (1S,5R)-carveol + oxidized [NADPH--hemoprotein reductase] + H2O + H(+). It carries out the reaction (4R)-limonene + reduced [NADPH--hemoprotein reductase] + O2 = (1R,5S)-carveol + oxidized [NADPH--hemoprotein reductase] + H2O + H(+). Its pathway is secondary metabolite biosynthesis; terpenoid biosynthesis. Involved in the biosynthesis of phenolic monoterpenes natural products thymol and carvacrol which have a broad range of biological activities acting as antimicrobial compounds, insecticides, antioxidants and pharmaceutical agents. Catalyzes the C2-hydroxylation of gamma-terpinene to produce carvacrol. Mediates also the C6-hydroxylation of (4S)-limonene and (4R)-limonene to form carveol. In Origanum majorana (Sweet marjoram), this protein is Cytochrome P450 71D180.